The sequence spans 372 residues: 3 beta-hydroxysteroid dehydrogenase/Delta 5--&gt;4-isomerase type 2 (372 aa).

Residue Tyr-154 is the Proton acceptor of the active site. Residue Lys-158 coordinates NAD(+). A helical membrane pass occupies residues 287-307; it reads LTLMYWIGFLLEVVSFLLSPI.

It belongs to the 3-beta-HSD family. In terms of tissue distribution, expressed in adrenal gland, testis and ovary.

Its subcellular location is the endoplasmic reticulum membrane. It is found in the mitochondrion membrane. The catalysed reaction is a 3beta-hydroxy-Delta(5)-steroid + NAD(+) = a 3-oxo-Delta(5)-steroid + NADH + H(+). It catalyses the reaction a 3-oxo-Delta(5)-steroid = a 3-oxo-Delta(4)-steroid. It carries out the reaction pregnenolone + NAD(+) = pregn-5-ene-3,20-dione + NADH + H(+). The enzyme catalyses pregn-5-ene-3,20-dione = progesterone. The catalysed reaction is 3beta-hydroxyandrost-5-en-17-one + NAD(+) = androst-5-ene-3,17-dione + NADH + H(+). It catalyses the reaction androst-5-ene-3,17-dione = androst-4-ene-3,17-dione. The protein operates within lipid metabolism; steroid biosynthesis. In terms of biological role, 3-beta-HSD is a bifunctional enzyme, that catalyzes the oxidative conversion of Delta(5)-ene-3-beta-hydroxy steroid, and the oxidative conversion of ketosteroids. The 3-beta-HSD enzymatic system plays a crucial role in the biosynthesis of all classes of hormonal steroids. The polypeptide is 3 beta-hydroxysteroid dehydrogenase/Delta 5--&gt;4-isomerase type 2 (Homo sapiens (Human)).